We begin with the raw amino-acid sequence, 434 residues long: Trigger factor (434 aa).

In terms of domain architecture, PPIase FKBP-type spans 160–245 (GDKVKMNFVG…LTEVQAANLP (86 aa)).

It belongs to the FKBP-type PPIase family. Tig subfamily.

The protein localises to the cytoplasm. It carries out the reaction [protein]-peptidylproline (omega=180) = [protein]-peptidylproline (omega=0). Functionally, involved in protein export. Acts as a chaperone by maintaining the newly synthesized protein in an open conformation. Functions as a peptidyl-prolyl cis-trans isomerase. This chain is Trigger factor, found in Shewanella baltica (strain OS223).